Here is a 496-residue protein sequence, read N- to C-terminus: Probable malate:quinone oxidoreductase (496 aa).

The protein belongs to the MQO family. The cofactor is FAD.

The catalysed reaction is (S)-malate + a quinone = a quinol + oxaloacetate. The protein operates within carbohydrate metabolism; tricarboxylic acid cycle; oxaloacetate from (S)-malate (quinone route): step 1/1. The chain is Probable malate:quinone oxidoreductase from Prochlorococcus marinus (strain MIT 9303).